We begin with the raw amino-acid sequence, 319 residues long: MGQGLWRVVRNQQLQQEGYSEQGYLTREQSRRMAASNISNTNHRKQVQGGIDIYHLLKARKSKEQEGFINLEMLPPELSFTILSYLNATDLCLASCVWQDLANDELLWQGLCKSTWGHCSIYNKNPPLGFSFRKLYMQLDEGSLTFNANPDEGVNYFMSKGILDDSPKEIAKFIFCTRTLNWKKLRIYLDERRDVLDDLVTLHNFRNQFLPNALREFFRHIHAPEERGEYLETLITKFSHRFCACNPDLMRELGLSPDAVYVLCYSLILLSIDLTSPHVKNKMSKREFIRNTRRAAQNISEDFVGHLYDNIYLIGHVAA.

An F-box domain is found at phenylalanine 68–leucine 111. The SEC7 domain maps to phenylalanine 146 to serine 276.

May promote guanine-nucleotide exchange on an ARF. Promotes the activation of ARF through replacement of GDP with GTP (Potential). The chain is F-box only protein 8 (FBXO8) from Homo sapiens (Human).